The chain runs to 680 residues: Cytosolic endo-beta-N-acetylglucosaminidase 1 (680 aa).

Residues 1 to 15 (MSVAPPAPSPPPFDP) are compositionally biased toward pro residues. The segment at 1 to 21 (MSVAPPAPSPPPFDPTKPSTP) is disordered.

The protein belongs to the glycosyl hydrolase 85 family.

It is found in the cytoplasm. The protein localises to the cytosol. It catalyses the reaction an N(4)-(oligosaccharide-(1-&gt;3)-[oligosaccharide-(1-&gt;6)]-beta-D-Man-(1-&gt;4)-beta-D-GlcNAc-(1-&gt;4)-alpha-D-GlcNAc)-L-asparaginyl-[protein] + H2O = an oligosaccharide-(1-&gt;3)-[oligosaccharide-(1-&gt;6)]-beta-D-Man-(1-&gt;4)-D-GlcNAc + N(4)-(N-acetyl-beta-D-glucosaminyl)-L-asparaginyl-[protein]. In terms of biological role, endoglycosidase that releases N-glycans from glycoproteins by cleaving the beta-1,4-glycosidic bond in the N,N'-diacetylchitobiose core. Involved in the production of high-mannose type N-glycans during plant development and fruit maturation. This chain is Cytosolic endo-beta-N-acetylglucosaminidase 1, found in Arabidopsis thaliana (Mouse-ear cress).